Here is a 572-residue protein sequence, read N- to C-terminus: Glypican-5 (572 aa).

Residues 1–24 (MDARTWRLGWRCLLLLALLGSTRS) form the signal peptide. N-linked (GlcNAc...) asparagine glycosylation is found at asparagine 120 and asparagine 237. Serine 486 is a glycosylation site (O-linked (Xyl...) (glycosaminoglycan) serine). Asparagine 493 carries N-linked (GlcNAc...) asparagine glycosylation. O-linked (Xyl...) (glycosaminoglycan) serine glycans are attached at residues serine 495, serine 507, and serine 509. N-linked (GlcNAc...) asparagine glycosylation occurs at asparagine 527.

It belongs to the glypican family.

The protein localises to the cell membrane. It is found in the secreted. It localises to the extracellular space. In terms of biological role, cell surface proteoglycan that bears heparan sulfate. The chain is Glypican-5 (Gpc5) from Mus musculus (Mouse).